The following is a 408-amino-acid chain: Phosphoglycerate kinase (408 aa).

Substrate-binding positions include 22–24 (DIN), R39, 60–63 (HQSR), R117, and R157. Residues E332 and 358–361 (GGHT) each bind ATP.

This sequence belongs to the phosphoglycerate kinase family. As to quaternary structure, monomer.

It localises to the cytoplasm. It catalyses the reaction (2R)-3-phosphoglycerate + ATP = (2R)-3-phospho-glyceroyl phosphate + ADP. It participates in carbohydrate degradation; glycolysis; pyruvate from D-glyceraldehyde 3-phosphate: step 2/5. In Thermoplasma acidophilum (strain ATCC 25905 / DSM 1728 / JCM 9062 / NBRC 15155 / AMRC-C165), this protein is Phosphoglycerate kinase (pgk).